We begin with the raw amino-acid sequence, 548 residues long: Rop guanine nucleotide exchange factor 1 (548 aa).

Residues 1 to 12 are compositionally biased toward acidic residues; that stretch reads MGSLSSEEDDEV. The disordered stretch occupies residues 1–38; it reads MGSLSSEEDDEVSSERCGSYSPSADISESESSSSFSCH. The segment covering 19–36 has biased composition (low complexity); it reads SYSPSADISESESSSSFS. The PRONE domain occupies 81–462; sequence DKQPDNDLSE…DAMRRSISVT (382 aa). Residues 458–548 form an involved in auto-inhibition region; sequence SISVTESLSL…RVTGVTPERD (91 aa). 2 positions are modified to phosphoserine: S460 and S480.

In terms of assembly, interacts with ARAC10/ROP11 and FER. Forms a complex with ARAC11/ROP1 and PRK2. Interacts in vitro (via PRONE domain) with PRK1, PRK2, PRK3 and PRK4. The C-terminal region is also important for the interaction with PRK2. Phosphorylated at Ser-460 and Ser-480 by PRK2. In terms of tissue distribution, expressed in roots, cotyledons, leaves, stems, sepals, petals, anthers, pollen grains, stigmas and siliques.

Its subcellular location is the cytoplasm. The protein localises to the cytosol. The protein resides in the cell membrane. Phosphorylation at Ser-460 and Ser-480 by PRK2 releases ROPGEF1 auto-inhibition, thereby activating ROPGEF1, which in turn activates ARAC11/ROP1. Guanine-nucleotide exchange factor (GEF) that acts as an activator of Rop (Rho of plants) GTPases by promoting the exchange of GDP for GTP. Acts downstream of PRK2 in the control of polarized pollen tube growth by activating ARAC11/ROP1. In association with ROPGEF4, acts as a specific regulator of ARAC10/ROP11 function in ABA-mediated stomatal closure. May play a role in the Rac/Rop-signaling pathway that controls ROS-mediated root hair development. The polypeptide is Rop guanine nucleotide exchange factor 1 (ROPGEF1) (Arabidopsis thaliana (Mouse-ear cress)).